Consider the following 348-residue polypeptide: Fructose-1,6-bisphosphatase class 1 (348 aa).

E104, D126, L128, and D129 together coordinate Mg(2+). Substrate-binding positions include 129-132 (DGSS), N221, Y249, and K279. E285 lines the Mg(2+) pocket.

Belongs to the FBPase class 1 family. As to quaternary structure, homotetramer. Mg(2+) serves as cofactor.

It is found in the cytoplasm. It catalyses the reaction beta-D-fructose 1,6-bisphosphate + H2O = beta-D-fructose 6-phosphate + phosphate. The protein operates within carbohydrate biosynthesis; Calvin cycle. The chain is Fructose-1,6-bisphosphatase class 1 from Thermosynechococcus vestitus (strain NIES-2133 / IAM M-273 / BP-1).